Consider the following 379-residue polypeptide: Glutamate 5-kinase (379 aa).

Lys-15 contacts ATP. Positions 54, 144, and 156 each coordinate substrate. 176–177 (TD) provides a ligand contact to ATP. Residues 282–360 (KGVILVDAGA…GEIERALGYK (79 aa)) form the PUA domain.

The protein belongs to the glutamate 5-kinase family.

The protein resides in the cytoplasm. The catalysed reaction is L-glutamate + ATP = L-glutamyl 5-phosphate + ADP. The protein operates within amino-acid biosynthesis; L-proline biosynthesis; L-glutamate 5-semialdehyde from L-glutamate: step 1/2. Catalyzes the transfer of a phosphate group to glutamate to form L-glutamate 5-phosphate. This is Glutamate 5-kinase from Anaeromyxobacter dehalogenans (strain 2CP-C).